The sequence spans 284 residues: NADH-cytochrome b5 reductase 1 (284 aa).

Residues 8-28 (PFIIFATVAAIISSAVAYYFF) form a helical membrane-spanning segment. One can recognise an FAD-binding FR-type domain in the interval 41 to 144 (NDFQKFPLIE…RGPKGFFTYT (104 aa)). FAD-binding positions include 124-139 (ESKK…GPKG) and 150-182 (SFGM…KVSL).

The protein belongs to the flavoprotein pyridine nucleotide cytochrome reductase family. Monomer. Component of the 2-(3-amino-3-carboxypropyl)histidine synthase complex composed of DPH1, DPH2, DPH3 and a NADH-dependent reductase, predominantly CBR1. FAD is required as a cofactor.

The protein resides in the mitochondrion outer membrane. The enzyme catalyses 2 Fe(III)-[cytochrome b5] + NADH = 2 Fe(II)-[cytochrome b5] + NAD(+) + H(+). The catalysed reaction is 2 Fe(3+)-[Dph3] + NADH = 2 Fe(2+)-[Dph3] + NAD(+) + H(+). It functions in the pathway protein modification; peptidyl-diphthamide biosynthesis. Functionally, NADH-dependent reductase for DPH3 and cytochrome b5. Required for the first step of diphthamide biosynthesis, a post-translational modification of histidine which occurs in elongation factor 2. DPH1 and DPH2 transfer a 3-amino-3-carboxypropyl (ACP) group from S-adenosyl-L-methionine (SAM) to a histidine residue, the reaction is assisted by a reduction system comprising DPH3 and a NADH-dependent reductase, predominantly CBR1. By reducing DPH3, also involved in the formation of the tRNA wobble base modification mcm5s 2U (5-methoxycarbonylmethyl-2-thiouridine), mediated by the elongator complex. The cytochrome b5/NADH cytochrome b5 reductase electron transfer system supports the catalytic activity of several sterol biosynthetic enzymes. In Debaryomyces hansenii (strain ATCC 36239 / CBS 767 / BCRC 21394 / JCM 1990 / NBRC 0083 / IGC 2968) (Yeast), this protein is NADH-cytochrome b5 reductase 1 (CBR1).